The sequence spans 400 residues: Acetate kinase (400 aa).

Asn10 provides a ligand contact to Mg(2+). Lys17 contacts ATP. Arg91 contacts substrate. Asp150 serves as the catalytic Proton donor/acceptor. Residues 210 to 214 (HLGNG), 285 to 287 (DCR), and 333 to 337 (GIGEN) each bind ATP. Residue Glu387 coordinates Mg(2+).

The protein belongs to the acetokinase family. In terms of assembly, homodimer. Mg(2+) is required as a cofactor. Requires Mn(2+) as cofactor.

Its subcellular location is the cytoplasm. It carries out the reaction acetate + ATP = acetyl phosphate + ADP. The protein operates within metabolic intermediate biosynthesis; acetyl-CoA biosynthesis; acetyl-CoA from acetate: step 1/2. Functionally, catalyzes the formation of acetyl phosphate from acetate and ATP. Can also catalyze the reverse reaction. The sequence is that of Acetate kinase from Serratia proteamaculans (strain 568).